We begin with the raw amino-acid sequence, 1705 residues long: Homeobox-DDT domain protein RLT1 (1705 aa).

5 disordered regions span residues Met1–Thr53, Glu118–Thr167, His237–Met267, Gly296–Pro322, and Gly352–Glu414. The segment at residues Val39–Gly98 is a DNA-binding region (homeobox). Over residues Gly136–Arg159 the composition is skewed to low complexity. Polar residues-rich tracts occupy residues Glu253–Pro265 and Arg310–Met319. The DDT domain occupies Asp549–Asp608. Positions Gly731 to Pro800 constitute an HTH HARE-type domain. 5 disordered regions span residues Thr1028 to Asn1053, Val1198 to Val1229, Pro1441 to Ser1502, Pro1561 to Tyr1635, and Ala1652 to Ser1705. The span at Ser1201–Ser1220 shows a compositional bias: low complexity. Over residues Ser1455–Gln1465 the composition is skewed to basic and acidic residues. Composition is skewed to acidic residues over residues Glu1565–Glu1574, Val1611–Gly1628, and Gly1669–Val1684.

As to quaternary structure, interacts with CHR11 and CHR17. Interacts (via the DDT domain) with CHR11 (via C-terminus). In terms of tissue distribution, highly expressed in growing tissues such as inflorescence and flower meristems, young leaves and floral organs. Expressed in roots, rosette and cauline leaves, stems, flowers, inflorescences and siliques.

It localises to the nucleus. Its function is as follows. Transcriptional regulator required for the maintenance of the plant vegetative phase. In association with CHR11 or CHR17 may prevent the early activation of the vegetative-to-reproductive transition by regulating key genes that contribute to flower timing, such as FT, SEP1, SEP3, AGL8/FUL, SOC1 and FLC. The sequence is that of Homeobox-DDT domain protein RLT1 from Arabidopsis thaliana (Mouse-ear cress).